A 369-amino-acid polypeptide reads, in one-letter code: Small RNA 2'-O-methyltransferase (369 aa).

S-adenosyl-L-methionine-binding residues include Ser39, Asp57, and Ser93. The Mg(2+) site is built by Glu111, Glu114, His115, and His161.

It belongs to the methyltransferase superfamily. HEN1 family. The cofactor is Mg(2+).

It is found in the cytoplasm. It carries out the reaction small RNA 3'-end nucleotide + S-adenosyl-L-methionine = small RNA 3'-end 2'-O-methylnucleotide + S-adenosyl-L-homocysteine + H(+). Its function is as follows. Methyltransferase that adds a 2'-O-methyl group at the 3'-end of piRNAs, a class of 24 to 30 nucleotide RNAs that are generated by a Dicer-independent mechanism and are primarily derived from transposons and other repeated sequence elements. This probably protects the 3'-end of piRNAs from uridylation activity and subsequent degradation. Stabilization of piRNAs is essential for gametogenesis. The chain is Small RNA 2'-O-methyltransferase (henmt1) from Xenopus tropicalis (Western clawed frog).